A 449-amino-acid chain; its full sequence is UDP-N-acetylmuramate--L-alanine ligase (449 aa).

ATP is bound at residue 121 to 127 (GAHGKSS).

The protein belongs to the MurCDEF family.

The protein localises to the cytoplasm. It carries out the reaction UDP-N-acetyl-alpha-D-muramate + L-alanine + ATP = UDP-N-acetyl-alpha-D-muramoyl-L-alanine + ADP + phosphate + H(+). Its pathway is cell wall biogenesis; peptidoglycan biosynthesis. Its function is as follows. Cell wall formation. The polypeptide is UDP-N-acetylmuramate--L-alanine ligase (Helicobacter pylori (strain J99 / ATCC 700824) (Campylobacter pylori J99)).